The following is a 136-amino-acid chain: Large ribosomal subunit protein uL16c (136 aa).

It belongs to the universal ribosomal protein uL16 family. Part of the 50S ribosomal subunit.

It is found in the plastid. The protein localises to the chloroplast. This chain is Large ribosomal subunit protein uL16c, found in Citrus sinensis (Sweet orange).